The sequence spans 256 residues: Anti-Pycsar protein Apyc1 (256 aa).

Residues 21–230 (YNNSALVTFT…EDQDRVFLMH (210 aa)) form a beta-lactamase-like region. His64, His66, Asp68, and His69 together coordinate Zn(2+). Catalysis depends on residues Glu74 and Tyr112. Residues His155, Asp179, and His230 each contribute to the Zn(2+) site.

It belongs to the anti-Pycsar protein Apyc1 family. As to quaternary structure, homodimer. Zn(2+) is required as a cofactor.

The enzyme catalyses 3',5'-cyclic CMP + H2O = CMP + H(+). It catalyses the reaction 3',5'-cyclic UMP + H2O = UMP + H(+). In terms of biological role, counteracts the host Pycsar antiviral defense system. Phosphodiesterase that enables metal-dependent hydrolysis of host cyclic nucleotide Pycsar defense signals such as cCMP and cUMP. The polypeptide is Anti-Pycsar protein Apyc1 (Bacillus phage BSP38).